The primary structure comprises 402 residues: Nicotinate phosphoribosyltransferase (402 aa).

Residue histidine 224 is modified to Phosphohistidine; by autocatalysis.

Belongs to the NAPRTase family. Post-translationally, transiently phosphorylated on a His residue during the reaction cycle. Phosphorylation strongly increases the affinity for substrates and increases the rate of nicotinate D-ribonucleotide production. Dephosphorylation regenerates the low-affinity form of the enzyme, leading to product release.

The enzyme catalyses nicotinate + 5-phospho-alpha-D-ribose 1-diphosphate + ATP + H2O = nicotinate beta-D-ribonucleotide + ADP + phosphate + diphosphate. It participates in cofactor biosynthesis; NAD(+) biosynthesis; nicotinate D-ribonucleotide from nicotinate: step 1/1. Its function is as follows. Catalyzes the synthesis of beta-nicotinate D-ribonucleotide from nicotinate and 5-phospho-D-ribose 1-phosphate at the expense of ATP. This Neisseria meningitidis serogroup A / serotype 4A (strain DSM 15465 / Z2491) protein is Nicotinate phosphoribosyltransferase.